Consider the following 341-residue polypeptide: S-adenosylmethionine:tRNA ribosyltransferase-isomerase (341 aa).

Belongs to the QueA family. In terms of assembly, monomer.

It localises to the cytoplasm. It carries out the reaction 7-aminomethyl-7-carbaguanosine(34) in tRNA + S-adenosyl-L-methionine = epoxyqueuosine(34) in tRNA + adenine + L-methionine + 2 H(+). The protein operates within tRNA modification; tRNA-queuosine biosynthesis. Transfers and isomerizes the ribose moiety from AdoMet to the 7-aminomethyl group of 7-deazaguanine (preQ1-tRNA) to give epoxyqueuosine (oQ-tRNA). The chain is S-adenosylmethionine:tRNA ribosyltransferase-isomerase from Staphylococcus epidermidis (strain ATCC 12228 / FDA PCI 1200).